The primary structure comprises 218 residues: Dual specificity protein phosphatase TpbA (218 aa).

Positions 1 to 28 (MHRSPLAWLRLLLAAVLGAFLLGGPLHA) are cleaved as a signal peptide. One can recognise a Tyrosine-protein phosphatase domain in the interval 44–188 (DPSINLYRMS…YVRGADVDGL (145 aa)). The active-site Proton donor/acceptor is the D105. C132 functions as the Phosphocysteine intermediate in the catalytic mechanism.

This sequence belongs to the protein-tyrosine phosphatase family.

The protein localises to the periplasm. The catalysed reaction is O-phospho-L-tyrosyl-[protein] + H2O = L-tyrosyl-[protein] + phosphate. It catalyses the reaction O-phospho-L-threonyl-[protein] + H2O = L-threonyl-[protein] + phosphate. It carries out the reaction O-phospho-L-seryl-[protein] + H2O = L-seryl-[protein] + phosphate. Its function is as follows. Phosphatase that regulates diverse phenotypes in P.aeruginosa via regulation of the concentration of cellular c-di-GMP. Acts by dephosphorylating the membrane-anchored diguanylate cyclase TpbB at tyrosine and serine/threonine sites, leading to inactivation of TpbB and reduced c-di-GMP production. In vitro shows phosphatase activity toward p-nitrophenyl phosphate (pNPP) and tyrosine phosphopeptides. Can efficiently dephosphorylate two phosphorylated peptides derived from the periplasmic domain of TpbB, with a strong preference for Tyr-48 over Tyr-62. The protein is Dual specificity protein phosphatase TpbA of Pseudomonas aeruginosa (strain ATCC 15692 / DSM 22644 / CIP 104116 / JCM 14847 / LMG 12228 / 1C / PRS 101 / PAO1).